Here is a 2178-residue protein sequence, read N- to C-terminus: Streptococcal hemagglutinin (2178 aa).

Positions 1–90 (MFFKRQKGQY…AVVTSSSVYA (90 aa)) are cleaved as a signal peptide. Residues 91 to 137 (EEEQALEKVIDTRDVLATRGEAVLSEEAATTLSSEGANPVESLSDTL) are non-repeat region 1 (NR1). The ser-rich region 1 (SR1) stretch occupies residues 138-219 (SASESASANS…SLISSDSSNS (82 aa)). Positions 192-244 (TSQSFSSTTSSTQSSNNESLISSDSSNSLNTNQSVSARNQNARVRTRRAVAAN) are enriched in low complexity. Disordered regions lie at residues 192–246 (TSQS…ANDT), 495–557 (VSAS…SVSA), 584–653 (SAST…SVSA), 836–857 (SASTSASVSASESASTSASVSA), 884–917 (SASTSASVSASESASTSASVSASESASTSASVSA), 944–993 (SAST…SESA), 1020–1289 (SASV…SVSA), 1341–1390 (ASTS…ESAS), 1488–1685 (SASV…SVSA), 1725–1901 (ASTS…SAST), and 2119–2151 (LSQSLSDSQSTSATQSMHDRISKGQLPRTGESE). A non-repeat region 2 (NR2) region spans residues 220–449 (LNTNQSVSAR…ANRVVKDLQI (230 aa)). The ser-rich region 2 (SR2) stretch occupies residues 450–2143 (SKSNSASQSS…SMHDRISKGQ (1694 aa)). The span at 2119–2130 (LSQSLSDSQSTS) shows a compositional bias: low complexity. Positions 2144–2148 (LPRTG) match the LPXTG sorting signal motif. T2147 is subject to Pentaglycyl murein peptidoglycan amidated threonine. The propeptide at 2148 to 2178 (GESESKASILALGIGALGLAFKKRKKNESED) is removed by sortase.

The protein belongs to the serine-rich repeat protein (SRRP) family. In terms of processing, the protein is glycosylated in vivo; constructs without SR1 and SR2 are not glycosylated.

The protein resides in the secreted. The protein localises to the cell wall. Its function is as follows. A cell wall protein involved with PadA in host cell interactions required for colonization and pathogensis. Mediates hemagglutination and adherence to ghst glycoproteins. Recognizes fetuin-A (AHSG), a highly glycosylated human plasma protein, also involved in recognition of human platelets, probably via platelet glycoprotein Ib alpha (GP1BA). Acts in concert with PadA to promote binding to glycosylated human fibronectin (FN1) and vitronectin (VTN), and biofilm formation. Plays a major role in fibronectin and vitronectin binding; binding is mediated by glycosylated regions. Probably mediates interaction of PadA with resting platelets. The protein is Streptococcal hemagglutinin of Streptococcus gordonii (strain Challis / ATCC 35105 / BCRC 15272 / CH1 / DL1 / V288).